The chain runs to 505 residues: Bile acid-sensitive ion channel (505 aa).

The interval 1–30 (MEQTEKSKVYAENGLLEKIKLCLSKKPLPS) is binds the plasma membrane and stabilizes the channel in the closed state. Residues 1-61 (MEQTEKSKVY…NIVQNRSKIR (61 aa)) are Cytoplasmic-facing. A helical membrane pass occupies residues 62 to 82 (RVLWLVVVLGSVSLVTWQIYI). At 83–459 (RLLNYFTWPT…GLFCGASLIT (377 aa)) the chain is on the extracellular side. 6 disulfide bridges follow: cysteine 112/cysteine 207, cysteine 185/cysteine 192, cysteine 298/cysteine 377, cysteine 315/cysteine 373, cysteine 328/cysteine 350, and cysteine 330/cysteine 342. Residues asparagine 147, asparagine 163, asparagine 178, and asparagine 179 are each glycosylated (N-linked (GlcNAc...) asparagine). Asparagine 306 is a glycosylation site (N-linked (GlcNAc...) asparagine). N-linked (GlcNAc...) asparagine glycosylation is found at asparagine 370, asparagine 405, and asparagine 421. Positions 454–456 (GAS) match the GAS motif; ion selectivity filter motif. Residues 460 to 480 (IIEIIEYLFTNFYWICIFFLL) traverse the membrane as a helical segment. The Cytoplasmic segment spans residues 481-505 (KISEMTQWTPPPQNHLGNKNRIEEC).

This sequence belongs to the amiloride-sensitive sodium channel (TC 1.A.6) family. ASIC5 subfamily. As to quaternary structure, forms homotrimeric channels. Detected in small intestine, duodenum and jejunum. Detected at very low levels in testis and rectum.

It is found in the apical cell membrane. The protein resides in the cell membrane. It carries out the reaction Na(+)(in) = Na(+)(out). The catalysed reaction is Li(+)(in) = Li(+)(out). It catalyses the reaction K(+)(in) = K(+)(out). The enzyme catalyses H(+)(in) = H(+)(out). With respect to regulation, inhibited by the diuretic drug amiloride. Its function is as follows. Forms bile acid-gated sodium channels and may play a role in bile acid-dependent absorption and secretion by epithelial cells of the bile ducts. Displays high selectivity for sodium ions but can also permit the permeation of other cations. The gating could be indirect and the consequence of alterations of the membrane environment of the channel by bile acids. As a sodium channel of type II unipolar brush cells of the vestibulocerebellum, controlling the electrical activity of these cells, could play a role in motor coordination and balance. In Homo sapiens (Human), this protein is Bile acid-sensitive ion channel.